The following is a 119-amino-acid chain: Ribonuclease (119 aa).

Substrate-binding residues include Lys6 and Arg9. His11 serves as the catalytic Proton acceptor. 3 disulfide bridges follow: Cys26–Cys81, Cys40–Cys92, and Cys58–Cys107. Residues 41–45 (KFTNT) and Arg82 contribute to the substrate site. Catalysis depends on His114, which acts as the Proton donor.

This sequence belongs to the pancreatic ribonuclease family. In terms of assembly, monomer. Interacts with and forms tight 1:1 complexes with RNH1. Dimerization of two such complexes may occur. Interaction with RNH1 inhibits this protein. Pancreas.

It localises to the secreted. It carries out the reaction an [RNA] containing cytidine + H2O = an [RNA]-3'-cytidine-3'-phosphate + a 5'-hydroxy-ribonucleotide-3'-[RNA].. It catalyses the reaction an [RNA] containing uridine + H2O = an [RNA]-3'-uridine-3'-phosphate + a 5'-hydroxy-ribonucleotide-3'-[RNA].. Its function is as follows. Endonuclease that catalyzes the cleavage of RNA on the 3' side of pyrimidine nucleotides. Acts on single-stranded and double-stranded RNA. This Chelydra serpentina (Snapping turtle) protein is Ribonuclease.